The sequence spans 140 residues: Encapsulated ferritin-like protein (140 aa).

Glutamate 31 is a binding site for Ca(2+). Glutamate 32 lines the Fe cation pocket. Glutamate 34 contacts Ca(2+). Positions 62 and 65 each coordinate Fe cation. Positions alanine 100 to leucine 140 are disordered. The segment at alanine 100–leucine 140 is targeting peptide.

This sequence belongs to the ferritin-like superfamily. EncFtn family. Monomers form antiparallel dimers which assemble in a decameric ring 7 nm in diameter and 4.5 nm thick with a central channel (construct without targeting peptide). Growth in Fe(2+)-rich medium induces oligomerization, the monomer does not bind metals. The target peptide probably extends away from the ring, to allow binding to the interior of the encapsulin nanocompartment shell. Requires Fe(2+) as cofactor. It depends on Ca(2+) as a cofactor.

It is found in the encapsulin nanocompartment. The catalysed reaction is 4 Fe(2+) + O2 + 4 H(+) = 4 Fe(3+) + 2 H2O. With respect to regulation, ferroxidase activity inhibited by Zn(2+). Mutants at Glu-31, Glu-34 and Trp-38 are also inhibited by Zn(2+). In terms of biological role, cargo protein of a type 1 encapsulin nanocompartment. A ferritin-like ferroxidase that mineralizes iron inside the encapsulin nanocompartment. Converts Fe(2+) to Fe(3+) that is released to the exterior of the decameric complex for deposition in the encapsulin nanocompartment. In solution the decamer binds 10-15 iron cations; in the encapsulin nanocompartment the decamer can bind up to 48 ions, perhaps via its internal channel and on its exterior. The empty encapsulin nanocompartment sequesters about 2200 Fe ions while the cargo-loaded nanocompartment can maximally sequester about 4150 Fe ions. EncFtn retains ferroxidase activity when encapsulated. Flux in the active site di-iron metal center is thought to be controlled by the 'entry site' of the protein, which both attracts metal and controls the rate of iron oxidation. Encapsulation in the nanocompartment does not alter either function of this protein. The polypeptide is Encapsulated ferritin-like protein (Rhodospirillum rubrum (strain ATCC 11170 / ATH 1.1.1 / DSM 467 / LMG 4362 / NCIMB 8255 / S1)).